A 185-amino-acid polypeptide reads, in one-letter code: Ribosome-recycling factor (185 aa).

It belongs to the RRF family.

Its subcellular location is the cytoplasm. Functionally, responsible for the release of ribosomes from messenger RNA at the termination of protein biosynthesis. May increase the efficiency of translation by recycling ribosomes from one round of translation to another. This is Ribosome-recycling factor from Corynebacterium aurimucosum (strain ATCC 700975 / DSM 44827 / CIP 107346 / CN-1) (Corynebacterium nigricans).